A 383-amino-acid chain; its full sequence is Na(+)/H(+) antiporter NhaA (383 aa).

11 consecutive transmembrane segments (helical) span residues 10 to 30 (LIGG…NNSP), 56 to 76 (LMHW…GLEI), 91 to 111 (IITP…IYLS), 121 to 141 (GWAI…ALLG), 150 to 170 (LLVI…IAIF), 174 to 194 (SLSL…IICN), 206 to 226 (VVLG…ATLA), 254 to 274 (PWII…ISFS), 275 to 295 (GISF…GLFV), 327 to 347 (GISL…VLAF), and 355 to 375 (AIKI…YIVL).

The protein belongs to the NhaA Na(+)/H(+) (TC 2.A.33) antiporter family.

It is found in the cell inner membrane. It carries out the reaction Na(+)(in) + 2 H(+)(out) = Na(+)(out) + 2 H(+)(in). Na(+)/H(+) antiporter that extrudes sodium in exchange for external protons. This chain is Na(+)/H(+) antiporter NhaA, found in Francisella tularensis subsp. novicida (strain U112).